Here is a 454-residue protein sequence, read N- to C-terminus: Bifunctional protein GlmU (454 aa).

A pyrophosphorylase region spans residues 1-227; that stretch reads MTQLSVVILA…FMEVEGANNR (227 aa). Residues 9–12, K23, Q74, 79–80, 101–103, G138, E152, N167, and N225 contribute to the UDP-N-acetyl-alpha-D-glucosamine site; these read LAAG, GT, and YGD. D103 is a Mg(2+) binding site. N225 contacts Mg(2+). The linker stretch occupies residues 228 to 248; the sequence is LQLAALERFYQKTQAEKLLLA. An N-acetyltransferase region spans residues 249–454; sequence GVRLIDPARF…QGWQRPTKKK (206 aa). R331 and K349 together coordinate UDP-N-acetyl-alpha-D-glucosamine. The Proton acceptor role is filled by H361. 2 residues coordinate UDP-N-acetyl-alpha-D-glucosamine: Y364 and N375. Acetyl-CoA is bound by residues A378, 384–385, S403, A421, and R438; that span reads NY.

The protein in the N-terminal section; belongs to the N-acetylglucosamine-1-phosphate uridyltransferase family. In the C-terminal section; belongs to the transferase hexapeptide repeat family. In terms of assembly, homotrimer. Mg(2+) serves as cofactor.

The protein localises to the cytoplasm. It carries out the reaction alpha-D-glucosamine 1-phosphate + acetyl-CoA = N-acetyl-alpha-D-glucosamine 1-phosphate + CoA + H(+). The enzyme catalyses N-acetyl-alpha-D-glucosamine 1-phosphate + UTP + H(+) = UDP-N-acetyl-alpha-D-glucosamine + diphosphate. It participates in nucleotide-sugar biosynthesis; UDP-N-acetyl-alpha-D-glucosamine biosynthesis; N-acetyl-alpha-D-glucosamine 1-phosphate from alpha-D-glucosamine 6-phosphate (route II): step 2/2. It functions in the pathway nucleotide-sugar biosynthesis; UDP-N-acetyl-alpha-D-glucosamine biosynthesis; UDP-N-acetyl-alpha-D-glucosamine from N-acetyl-alpha-D-glucosamine 1-phosphate: step 1/1. Its pathway is bacterial outer membrane biogenesis; LPS lipid A biosynthesis. Catalyzes the last two sequential reactions in the de novo biosynthetic pathway for UDP-N-acetylglucosamine (UDP-GlcNAc). The C-terminal domain catalyzes the transfer of acetyl group from acetyl coenzyme A to glucosamine-1-phosphate (GlcN-1-P) to produce N-acetylglucosamine-1-phosphate (GlcNAc-1-P), which is converted into UDP-GlcNAc by the transfer of uridine 5-monophosphate (from uridine 5-triphosphate), a reaction catalyzed by the N-terminal domain. This is Bifunctional protein GlmU from Actinobacillus pleuropneumoniae serotype 3 (strain JL03).